We begin with the raw amino-acid sequence, 251 residues long: Lactose phosphotransferase system repressor (251 aa).

Residues 3-58 (KHERLDEIAKLVNKKGTIRTNEIVEGLNVSDMTVRRDLIELENKGILTKIHGGARS) form the HTH deoR-type domain. The H-T-H motif DNA-binding region spans 20 to 39 (IRTNEIVEGLNVSDMTVRRD).

In terms of biological role, repressor of the lactose catabolism operon. Galactose-6-phosphate is the inducer. The sequence is that of Lactose phosphotransferase system repressor (lacR) from Staphylococcus aureus (strain N315).